A 176-amino-acid chain; its full sequence is Disulfide bond formation protein B (176 aa).

At 1-14 the chain is on the cytoplasmic side; that stretch reads MLQFLNRCSKGRGA. Residues 15-31 traverse the membrane as a helical segment; sequence WLLMALTALVLELVALY. Over 32 to 49 the chain is Periplasmic; the sequence is FQHVMLLQPCVMCIYERA. Cys-41 and Cys-44 are oxidised to a cystine. The chain crosses the membrane as a helical span at residues 50–65; the sequence is ALFGILGASLLGAIAP. The Cytoplasmic portion of the chain corresponds to 66–71; the sequence is KSPLRY. Residues 72–89 form a helical membrane-spanning segment; the sequence is LAIFIWIYSAWKGVQLAW. Residues 90-144 lie on the Periplasmic side of the membrane; the sequence is THTMLQLHPSPFTTCDFFVSFPSWLPLDKWFPAVFVASGDCAVKQWEFLSLEMPQ. A disulfide bridge connects residues Cys-104 and Cys-130. Residues 145–163 form a helical membrane-spanning segment; the sequence is WLVGIFAAYLFIAILVLIS. At 164–176 the chain is on the cytoplasmic side; it reads QFVKPKRRDLFSR.

Belongs to the DsbB family.

The protein localises to the cell inner membrane. In terms of biological role, required for disulfide bond formation in some periplasmic proteins. Acts by oxidizing the DsbA protein. The polypeptide is Disulfide bond formation protein B (Yersinia enterocolitica serotype O:8 / biotype 1B (strain NCTC 13174 / 8081)).